Consider the following 465-residue polypeptide: Ribulose bisphosphate carboxylase large chain (465 aa).

Lys-4 is modified (N6,N6,N6-trimethyllysine). Substrate contacts are provided by Asn-113 and Thr-163. The active-site Proton acceptor is the Lys-165. Lys-167 lines the substrate pocket. 3 residues coordinate Mg(2+): Lys-191, Asp-193, and Glu-194. Lys-191 is modified (N6-carboxylysine). His-284 (proton acceptor) is an active-site residue. Substrate-binding residues include Arg-285, His-317, and Ser-369.

This sequence belongs to the RuBisCO large chain family. Type I subfamily. Heterohexadecamer of 8 large chains and 8 small chains; disulfide-linked. The disulfide link is formed within the large subunit homodimers. The cofactor is Mg(2+). In terms of processing, the disulfide bond which can form in the large chain dimeric partners within the hexadecamer appears to be associated with oxidative stress and protein turnover.

The protein localises to the plastid. It localises to the chloroplast. The enzyme catalyses 2 (2R)-3-phosphoglycerate + 2 H(+) = D-ribulose 1,5-bisphosphate + CO2 + H2O. It carries out the reaction D-ribulose 1,5-bisphosphate + O2 = 2-phosphoglycolate + (2R)-3-phosphoglycerate + 2 H(+). RuBisCO catalyzes two reactions: the carboxylation of D-ribulose 1,5-bisphosphate, the primary event in carbon dioxide fixation, as well as the oxidative fragmentation of the pentose substrate in the photorespiration process. Both reactions occur simultaneously and in competition at the same active site. This Humiria balsamifera (Tauroniro) protein is Ribulose bisphosphate carboxylase large chain.